A 773-amino-acid polypeptide reads, in one-letter code: LON peptidase N-terminal domain and RING finger protein 1 (773 aa).

Residues 1-29 (MSSPAVARTSPGGSREMAPAPQGRGRFWE) form a disordered region. The stretch at 48–81 (WELLLRRGELLALGGHLKGALEAFAAALRRGAPA) is one TPR 1 repeat. An RING-type 1 zinc finger spans residues 123-159 (CLGCRGFLSEPVTVPCGHSYCRRCLRRELRARCRLCR). TPR repeat units follow at residues 212 to 244 (ARAAGRLGELLHQGRYREALAAACEALRAEPSD), 246 to 278 (IVKIYRAESYAGLQEFKAAIEDLNAVLFQLPDW), and 279 to 312 (PEVYFRKGKVLCDAGFLGDALQLFLQCLALDEDF). Over residues 359–370 (EESQSLNEPSPK) the composition is skewed to polar residues. A disordered region spans residues 359-388 (EESQSLNEPSPKQSEEIPEVTSEPVKGSLN). S431 is subject to Phosphoserine. The RING-type 2 zinc finger occupies 479–517 (CSLCMRLFFEPVTTPCGHSFCKNCLERCLDHAPYCPLCK). A Lon N-terminal domain is found at 558–768 (TAELSHLTKN…KIQHILTYFS (211 aa)).

The protein is LON peptidase N-terminal domain and RING finger protein 1 (LONRF1) of Homo sapiens (Human).